The following is a 273-amino-acid chain: MAIHLYKTSTPSTRNGAVDSQVKSNPRKNLIYGQHRCGKGRNARGIITAGHRGGGHKRLYRKIDFRRNEKDISGRIVTIEYDPNRNAYICLIHYGDGEKRYILHPRGAIIGDTIVSGTEVPISMGNALPLTDMPLGTAIHNIEITLGKGGQLARAAGAVAKLIAKEGKSATLRLPSGEVRLISKNCSATVGQVGNVGVNQKILGRAGSKCWLGKRPVVRGVVMNPVDHPHGGGEGRAPIGRKKPTTPWGYPALGRRSRKKKKYSDSFILRRRK.

Disordered regions lie at residues 1 to 23 (MAIHLYKTSTPSTRNGAVDSQVK) and 224 to 273 (NPVD…RRRK).

This sequence belongs to the universal ribosomal protein uL2 family. Part of the 50S ribosomal subunit.

Its subcellular location is the plastid. It localises to the chloroplast. This is Large ribosomal subunit protein uL2cz/uL2cy (rpl2-A) from Amborella trichopoda.